Here is a 318-residue protein sequence, read N- to C-terminus: Bis(5'-nucleosyl)-tetraphosphatase, symmetrical (318 aa).

A disordered region spans residues 269–318 (PGREVTGPAPVARAPRRPRERLGRQRSRGNRGNAGNTAVPAKPQVDTPQD). The span at 282–297 (APRRPRERLGRQRSRG) shows a compositional bias: basic residues.

It belongs to the Ap4A hydrolase family.

The catalysed reaction is P(1),P(4)-bis(5'-adenosyl) tetraphosphate + H2O = 2 ADP + 2 H(+). In terms of biological role, hydrolyzes diadenosine 5',5'''-P1,P4-tetraphosphate to yield ADP. The polypeptide is Bis(5'-nucleosyl)-tetraphosphatase, symmetrical (Xanthomonas oryzae pv. oryzae (strain KACC10331 / KXO85)).